A 223-amino-acid chain; its full sequence is Thiamine-phosphate synthase (223 aa).

4-amino-2-methyl-5-(diphosphooxymethyl)pyrimidine contacts are provided by residues Q37 to K41 and N69. 2 residues coordinate Mg(2+): D70 and D89. S108 is a 4-amino-2-methyl-5-(diphosphooxymethyl)pyrimidine binding site. T134–T136 lines the 2-[(2R,5Z)-2-carboxy-4-methylthiazol-5(2H)-ylidene]ethyl phosphate pocket. K137 contacts 4-amino-2-methyl-5-(diphosphooxymethyl)pyrimidine. Residues G167 and V187–S188 contribute to the 2-[(2R,5Z)-2-carboxy-4-methylthiazol-5(2H)-ylidene]ethyl phosphate site. The disordered stretch occupies residues A197–A223. Residues S206–P217 are compositionally biased toward polar residues.

Belongs to the thiamine-phosphate synthase family. Mg(2+) serves as cofactor.

The catalysed reaction is 2-[(2R,5Z)-2-carboxy-4-methylthiazol-5(2H)-ylidene]ethyl phosphate + 4-amino-2-methyl-5-(diphosphooxymethyl)pyrimidine + 2 H(+) = thiamine phosphate + CO2 + diphosphate. It carries out the reaction 2-(2-carboxy-4-methylthiazol-5-yl)ethyl phosphate + 4-amino-2-methyl-5-(diphosphooxymethyl)pyrimidine + 2 H(+) = thiamine phosphate + CO2 + diphosphate. The enzyme catalyses 4-methyl-5-(2-phosphooxyethyl)-thiazole + 4-amino-2-methyl-5-(diphosphooxymethyl)pyrimidine + H(+) = thiamine phosphate + diphosphate. Its pathway is cofactor biosynthesis; thiamine diphosphate biosynthesis; thiamine phosphate from 4-amino-2-methyl-5-diphosphomethylpyrimidine and 4-methyl-5-(2-phosphoethyl)-thiazole: step 1/1. In terms of biological role, condenses 4-methyl-5-(beta-hydroxyethyl)thiazole monophosphate (THZ-P) and 2-methyl-4-amino-5-hydroxymethyl pyrimidine pyrophosphate (HMP-PP) to form thiamine monophosphate (TMP). The polypeptide is Thiamine-phosphate synthase (Haloquadratum walsbyi (strain DSM 16790 / HBSQ001)).